The following is a 156-amino-acid chain: MSMVVYNNQEGEEGNPFAGALTEFSQWLWSRPLGNPGAEDAEEEAIAAQEELEFPEDEAQARHSCLQRTTSWATPKEVSPSGRVYQTVRHSRMEYSRPTMSIRSQASYFSSSARPLPPPPVPSLMSWTPIAKYHPSSPTSTSSKLRRAAPKLIKRG.

A homodimerization region spans residues 38–54; sequence AEDAEEEAIAAQEELEF. Disordered regions lie at residues 55–80 and 106–156; these read PEDE…EVSP and ASYF…IKRG. The RNA-binding stretch occupies residues 57-156; it reads DEAQARHSCL…RAAPKLIKRG (100 aa). A phosphoserine mark is found at serine 71, serine 79, serine 137, and serine 140. The span at 144–156 shows a compositional bias: basic residues; it reads KLRRAAPKLIKRG.

It belongs to the polerovirus movement protein family. In terms of assembly, homodimer. In terms of processing, expressed as a nonphosphorylated 20kDa form and a phosphorylated 22kDa form. Phosphorylated by a host PKC-related kinase. Serine phosphorylation is required for plamodesma targeting.

It localises to the host cell junction. The protein resides in the host plasmodesma. It is found in the host chloroplast envelope. Its subcellular location is the host Golgi apparatus. The protein localises to the host mitochondrion outer membrane. Functionally, together with movement protein P3a, facilitates long-distance movement of virions in host. Transports viral genome to neighboring plant cells directly through plasmosdesmata, without any budding. The movement protein allows efficient cell to cell propagation, by bypassing the host cell wall barrier. Binds ssRNA. This chain is Movement protein P17, found in Potato leafroll virus (strain Potato/Canada/Rowhani/1979) (PLrV).